We begin with the raw amino-acid sequence, 677 residues long: Methionine--tRNA ligase (677 aa).

Residues 15 to 25 carry the 'HIGH' region motif; it reads PYANGSIHLGH. Zn(2+) contacts are provided by cysteine 146, cysteine 149, cysteine 159, and cysteine 162. A 'KMSKS' region motif is present at residues 333-337; that stretch reads KMSKS. Residue lysine 336 coordinates ATP. In terms of domain architecture, tRNA-binding spans 575–677; that stretch reads DFAKVDLRVA…AGAKPGHQVK (103 aa).

Belongs to the class-I aminoacyl-tRNA synthetase family. MetG type 1 subfamily. In terms of assembly, homodimer. The cofactor is Zn(2+).

It localises to the cytoplasm. It carries out the reaction tRNA(Met) + L-methionine + ATP = L-methionyl-tRNA(Met) + AMP + diphosphate. Functionally, is required not only for elongation of protein synthesis but also for the initiation of all mRNA translation through initiator tRNA(fMet) aminoacylation. The chain is Methionine--tRNA ligase from Shigella dysenteriae serotype 1 (strain Sd197).